The primary structure comprises 250 residues: Endonuclease NucS (250 aa).

Belongs to the NucS endonuclease family.

It localises to the cytoplasm. Functionally, cleaves both 3' and 5' ssDNA extremities of branched DNA structures. The sequence is that of Endonuclease NucS from Sulfolobus acidocaldarius (strain ATCC 33909 / DSM 639 / JCM 8929 / NBRC 15157 / NCIMB 11770).